Here is a 105-residue protein sequence, read N- to C-terminus: MMAKIVSGDDVIVIAGSDKGKIGKVVKILRKGGHVVAKVAGVALCRKSVKPSKDREGGIFSVERFIDISNIALFDSEAGVRTKVGYKFVDGKKVRYLKGSGRVLD.

Belongs to the universal ribosomal protein uL24 family. In terms of assembly, part of the 50S ribosomal subunit.

Its function is as follows. One of two assembly initiator proteins, it binds directly to the 5'-end of the 23S rRNA, where it nucleates assembly of the 50S subunit. One of the proteins that surrounds the polypeptide exit tunnel on the outside of the subunit. The chain is Large ribosomal subunit protein uL24 from Anaplasma marginale (strain St. Maries).